Reading from the N-terminus, the 412-residue chain is MNSNQNNDIKTKHHFPLLLALALTMGVFAAGSEELVISPLLPDLAKAFSSDVSVLALSISIYGVMIFIGAPLLVPLGDKYSRELSLLAGLMIFIIGTVICALAQNIFFFFLGRALSGLAAGAFVPTAYAVVGDRVPYTYRGKVMGLIVSSWSLALIFGVPLGSFIGGVLHWRWTFWIFALMGVLVVLLILLEMRRHAQHKNSGKEEIEEPAGTFRDALKVPRVPVYITITFCNMIGFYGMYSFLGTYLQDVFTGGNTAAGLFIMIYGIGFSMSVITGKIADRIGKMRSLLIALGVISVLLACLPYAPASMFLLIASLFIWGLMQSLTVTLLSTILSDCSERHRGKVMVFYSLASNLAVTLGSALMGPVYVAYGYAAVGLICAAITVLGFVLSVFAYKKYGKLEQKADQSLSQ.

A run of 11 helical transmembrane segments spans residues 17-37 (LLLA…ELVI), 54-74 (VLAL…PLLV), 91-111 (MIFI…FFFL), 112-132 (GRAL…AVVG), 146-166 (LIVS…SFIG), 173-193 (WTFW…LLEM), 225-245 (VYIT…SFLG), 257-277 (TAAG…VITG), 299-319 (LLAC…SLFI), 346-366 (VMVF…ALMG), and 375-395 (AAVG…SVFA).

The protein belongs to the major facilitator superfamily.

Its subcellular location is the cell membrane. This is an uncharacterized protein from Bacillus subtilis (strain 168).